A 296-amino-acid chain; its full sequence is UBX domain-containing protein 1-A (296 aa).

Residues M1 to H42 form the UBA domain. Residues E43–Y216 form a disordered region. Residues T61–T75 show a composition bias toward low complexity. 3 stretches are compositionally biased toward basic and acidic residues: residues P86–M100, Q107–K123, and K138–R178. A coiled-coil region spans residues L87–A177. The segment covering P191–P206 has biased composition (low complexity). A UBX domain is found at K214–V293.

Its subcellular location is the cytoplasm. Functionally, component of a complex required to couple deglycosylation and proteasome-mediated degradation of misfolded proteins in the endoplasmic reticulum that are retrotranslocated in the cytosol. Involved in ubiquitin-proteasome systems. This is UBX domain-containing protein 1-A (ubxn1-a) from Xenopus laevis (African clawed frog).